We begin with the raw amino-acid sequence, 1585 residues long: Sterol 3-beta-glucosyltransferase (1585 aa).

Residues 1-18 (MSPPISPTPPPLQPPFPP) are compositionally biased toward pro residues. Disordered regions lie at residues 1-154 (MSPP…CDFR), 177-225 (PWEE…PTHT), and 249-279 (YQYA…LPKG). Polar residues-rich tracts occupy residues 65 to 77 (DQAT…SLIP), 105 to 123 (DAQT…STHE), and 132 to 148 (PRTS…QMAE). The span at 178 to 194 (WEEDDDSDDGEDDDEFI) shows a compositional bias: acidic residues. Over residues 255-273 (ETSSRRTSAAGSESSSEGE) the composition is skewed to low complexity. One can recognise a GRAM 1 domain in the interval 387-555 (ERLMEVFGLE…EAIVDVEKSP (169 aa)). The PH domain maps to 438-530 (LLVKSGPLHK…WVKAIQKVMF (93 aa)). Disordered regions lie at residues 625–645 (TSHA…LGMA) and 666–852 (DGEP…GSES). Residues 670 to 689 (LEEHSQGPHHNDEDASHLPH) show a composition bias toward basic and acidic residues. Composition is skewed to polar residues over residues 760-785 (TDSS…QASV), 806-817 (NKPSVVDSNSAE), and 827-840 (SWTS…QMVK). Residues 862-933 (RKFRTFFALS…RDLYGLKAQK (72 aa)) enclose the GRAM 2 domain. Residues serine 1043, arginine 1044, aspartate 1046, isoleucine 1358, histidine 1360, histidine 1373, glycine 1377, threonine 1378, aspartate 1397, and glutamine 1398 each coordinate UDP-alpha-D-glucose. Residues 1499 to 1555 (NRVRSRSRSRSRSSQGRFSPRRHTVDDDGWSVVSGGSRSRSGSASAVTSPERRPLNI) are disordered. The segment covering 1529–1545 (SVVSGGSRSRSGSASAV) has biased composition (low complexity).

It belongs to the glycosyltransferase 28 family.

Its subcellular location is the cytoplasm. It is found in the membrane. It carries out the reaction a sterol + UDP-alpha-D-glucose = a sterol 3-beta-D-glucoside + UDP + H(+). It catalyses the reaction ergosterol + UDP-alpha-D-glucose = ergosteryl 3-beta-D-glucoside + UDP + H(+). Sterol glycosyltransferase responsible for the glycosylation of ergosterol to form ergosterol-glucoside. The chain is Sterol 3-beta-glucosyltransferase from Cryptococcus neoformans var. neoformans serotype D (strain JEC21 / ATCC MYA-565) (Filobasidiella neoformans).